The sequence spans 211 residues: MNDDFIAAEELLQRGAAALSFPVNQEVIEKLMHYLQLLAKWNRVHNLTAIREPQQQVIVHLLDSLVVAPFLPPAQTIADIGSGAGLPGIVLAIVCPQQQFFLVESNTKKSVFLREAVRQLALENVKVVAMRAEQWRPEAKLNVLISRAVSDINSFLMWTAALGDENSRWLLMKAHDDEVCTQKDFYVENVLPLTVPLLDAARVLFVVKKKS.

S-adenosyl-L-methionine-binding positions include Gly-81, Leu-86, Ala-132 to Glu-133, and Arg-147.

It belongs to the methyltransferase superfamily. RNA methyltransferase RsmG family.

The protein resides in the cytoplasm. The catalysed reaction is guanosine(527) in 16S rRNA + S-adenosyl-L-methionine = N(7)-methylguanosine(527) in 16S rRNA + S-adenosyl-L-homocysteine. Functionally, specifically methylates the N7 position of guanine in position 527 of 16S rRNA. The polypeptide is Ribosomal RNA small subunit methyltransferase G (Dichelobacter nodosus (strain VCS1703A)).